The following is a 270-amino-acid chain: Glucosamine-6-phosphate deaminase (270 aa).

Residue D72 is the Proton acceptor; for enolization step of the active site. The For ring-opening step role is filled by D141. H143 serves as the catalytic Proton acceptor; for ring-opening step. E148 serves as the catalytic For ring-opening step.

The protein belongs to the glucosamine/galactosamine-6-phosphate isomerase family. NagB subfamily.

It carries out the reaction alpha-D-glucosamine 6-phosphate + H2O = beta-D-fructose 6-phosphate + NH4(+). It functions in the pathway amino-sugar metabolism; N-acetylneuraminate degradation; D-fructose 6-phosphate from N-acetylneuraminate: step 5/5. Its activity is regulated as follows. Allosterically activated by N-acetylglucosamine 6-phosphate (GlcNAc6P). In terms of biological role, catalyzes the reversible isomerization-deamination of glucosamine 6-phosphate (GlcN6P) to form fructose 6-phosphate (Fru6P) and ammonium ion. This chain is Glucosamine-6-phosphate deaminase, found in Parabacteroides distasonis (strain ATCC 8503 / DSM 20701 / CIP 104284 / JCM 5825 / NCTC 11152).